We begin with the raw amino-acid sequence, 601 residues long: Putative ankyrin repeat protein R841 (601 aa).

ANK repeat units lie at residues 17-50 (NNIT…DVNA), 54-86 (HGKS…DVNH), 91-123 (QRSV…NINY), 165-197 (RENI…NIDH), 201-234 (YGQT…NINS), 238-269 (KGWS…EINS), 274-310 (NETM…SIDN), 314-349 (KGYT…NINS), 361-390 (VCCD…DVNS), 397-427 (TILM…NPNI), 432-463 (YHKF…DPNI), and 467-500 (IGNN…SYNC).

The polypeptide is Putative ankyrin repeat protein R841 (Acanthamoeba polyphaga mimivirus (APMV)).